Reading from the N-terminus, the 504-residue chain is Maturase K (504 aa).

Belongs to the intron maturase 2 family. MatK subfamily.

It localises to the plastid. It is found in the chloroplast. Usually encoded in the trnK tRNA gene intron. Probably assists in splicing its own and other chloroplast group II introns. The protein is Maturase K of Arabidopsis halleri.